We begin with the raw amino-acid sequence, 763 residues long: Putative alpha-1,3-mannosyltransferase MNN15 (763 aa).

At 1-7 the chain is on the cytoplasmic side; it reads MRFTLKK. The chain crosses the membrane as a helical span at residues 8–28; sequence IFFVFLTLLIISIGYLLLQSV. The Lumenal segment spans residues 29–763; it reads DLQRIRELLH…KDATTVRLRI (735 aa). Residues Asn71, Asn157, and Asn169 are each glycosylated (N-linked (GlcNAc...) asparagine). The disordered stretch occupies residues 617 to 659; that stretch reads LVPPDLPNQREPGSPPDTKPEMEFRKSWKSRKKDTDEINEKLP. Basic and acidic residues predominate over residues 649 to 659; it reads KDTDEINEKLP.

This sequence belongs to the MNN1/MNT family.

It is found in the golgi apparatus membrane. The protein operates within protein modification; protein glycosylation. Responsible for addition of the terminal mannose residues to the outer chain of core N-linked polysaccharides and to O-linked mannotriose. Implicated in late Golgi modifications. The chain is Putative alpha-1,3-mannosyltransferase MNN15 (MNN15) from Candida albicans (strain SC5314 / ATCC MYA-2876) (Yeast).